The primary structure comprises 232 residues: Peptidyl-prolyl cis-trans isomerase CYP26-1 (232 aa).

A PPIase cyclophilin-type domain is found at Phe7 to Glu166. Asn108 is a glycosylation site (N-linked (GlcNAc...) asparagine). The chain crosses the membrane as a helical span at residues Tyr212–Val232.

It belongs to the cyclophilin-type PPIase family. In terms of tissue distribution, expressed only in flowers.

It is found in the membrane. It carries out the reaction [protein]-peptidylproline (omega=180) = [protein]-peptidylproline (omega=0). PPIases accelerate the folding of proteins. It catalyzes the cis-trans isomerization of proline imidic peptide bonds in oligopeptides. The protein is Peptidyl-prolyl cis-trans isomerase CYP26-1 (CYP26-1) of Arabidopsis thaliana (Mouse-ear cress).